Consider the following 84-residue polypeptide: Small ribosomal subunit protein uS17 (84 aa).

This sequence belongs to the universal ribosomal protein uS17 family. As to quaternary structure, part of the 30S ribosomal subunit.

One of the primary rRNA binding proteins, it binds specifically to the 5'-end of 16S ribosomal RNA. The sequence is that of Small ribosomal subunit protein uS17 from Buchnera aphidicola subsp. Cinara cedri (strain Cc).